Consider the following 299-residue polypeptide: Delta-9 desaturase-like 2 protein (299 aa).

A helical transmembrane segment spans residues W55–S75. Residues H77 to H82 carry the Histidine box-1 motif. Residues H114–H118 carry the Histidine box-2 motif. A helical membrane pass occupies residues L174–L194. The short motif at H246–H250 is the Histidine box-3 element. A helical transmembrane segment spans residues W262–T282.

Belongs to the fatty acid desaturase type 1 family. Fe cation serves as cofactor.

Its subcellular location is the endoplasmic reticulum membrane. Its pathway is lipid metabolism; polyunsaturated fatty acid biosynthesis. The protein is Delta-9 desaturase-like 2 protein of Arabidopsis thaliana (Mouse-ear cress).